Here is a 327-residue protein sequence, read N- to C-terminus: Cell division protein ZipA (327 aa).

Residues 1–5 (MQDLR) are Periplasmic-facing. A helical transmembrane segment spans residues 6–26 (LILIVVGAIAIIALLLHGLWT). At 27 to 327 (SRKERSSLFR…REVLDANTIA (301 aa)) the chain is on the cytoplasmic side. A compositionally biased stretch (basic and acidic residues) spans 60-71 (GEVRVRTSHPQE). Positions 60 to 182 (GEVRVRTSHP…EPVAPAPEAK (123 aa)) are disordered. Composition is skewed to polar residues over residues 94-103 (KSAQVKTASR) and 163-173 (APQQHVESQQE).

This sequence belongs to the ZipA family. As to quaternary structure, interacts with FtsZ via their C-terminal domains.

The protein resides in the cell inner membrane. Its function is as follows. Essential cell division protein that stabilizes the FtsZ protofilaments by cross-linking them and that serves as a cytoplasmic membrane anchor for the Z ring. Also required for the recruitment to the septal ring of downstream cell division proteins. The protein is Cell division protein ZipA of Yersinia pseudotuberculosis serotype O:1b (strain IP 31758).